We begin with the raw amino-acid sequence, 257 residues long: 5-oxoprolinase subunit A (257 aa).

Belongs to the LamB/PxpA family. As to quaternary structure, forms a complex composed of PxpA, PxpB and PxpC.

The enzyme catalyses 5-oxo-L-proline + ATP + 2 H2O = L-glutamate + ADP + phosphate + H(+). In terms of biological role, catalyzes the cleavage of 5-oxoproline to form L-glutamate coupled to the hydrolysis of ATP to ADP and inorganic phosphate. The sequence is that of 5-oxoprolinase subunit A from Pectobacterium atrosepticum (strain SCRI 1043 / ATCC BAA-672) (Erwinia carotovora subsp. atroseptica).